The following is a 130-amino-acid chain: Small ribosomal subunit protein uS11c (130 aa).

Belongs to the universal ribosomal protein uS11 family. In terms of assembly, part of the 30S ribosomal subunit.

Its subcellular location is the plastid. It is found in the chloroplast. In Tupiella akineta (Green alga), this protein is Small ribosomal subunit protein uS11c.